A 560-amino-acid chain; its full sequence is Radial spoke head protein 3 homolog (560 aa).

Disordered stretches follow at residues 134–186 (RKRG…EEPM) and 225–249 (ARKR…PVEG). Residues 153 to 162 (RAPSTYTYTS) show a composition bias toward polar residues. Residues 215-239 (DSLELQRQREARKRALARKQAQEQL) are a coiled coil. T286 bears the Phosphothreonine; by MAPK1 mark. The stretch at 331–385 (LEVMEEEELANLRASQREYEELRNSERAEVQRLEEQERRHREEKERRKKQQWEIM) forms a coiled coil. Disordered stretches follow at residues 354-375 (NSER…EEKE), 473-498 (HGED…ESLE), and 526-560 (DRRS…EELS).

Belongs to the flagellar radial spoke RSP3 family. As to quaternary structure, component of the axonemal radial spoke 1 (RS1) and 2 (RS2) complexes, at least composed of spoke head proteins RSPH1, RSPH3, RSPH9 and the cilia-specific component RSPH4A or sperm-specific component RSPH6A, spoke stalk proteins RSPH14, DNAJB13, DYDC1, ROPN1L and NME5, and the RS1 complex-specific anchor protein IQUB. Interacts with IQUB. Interacts with phosphorylated MAPK1. Interacts with MEK1. Interacts with PKA regulatory subunits PRKAR1A and PRKAR1B. Interacts with RSPH1. Interacts with RSPH4A. Interacts with RSPH6A. Interacts with RSPH9. Interacts with LRRC23.

Its subcellular location is the cytoplasm. It localises to the cytoskeleton. The protein localises to the cilium axoneme. It is found in the flagellum axoneme. In terms of biological role, functions as part of axonemal radial spoke complexes that play an important part in the motility of sperm and cilia. Functions as a protein kinase A-anchoring protein that scaffolds the cAMP-dependent protein kinase holoenzyme. May serve as a point of convergence for MAPK and PKA signaling in cilia. In Homo sapiens (Human), this protein is Radial spoke head protein 3 homolog (RSPH3).